The primary structure comprises 382 residues: Intermediate transcription factor 3 large subunit (382 aa).

Belongs to the poxviruses A23 family. In terms of assembly, heterodimer of a 45 kDa and a 32 kDa subunit.

In terms of biological role, acts with RNA polymerase to initiate transcription from intermediate gene promoters. In Monkeypox virus (strain Zaire-96-I-16) (MPX), this protein is Intermediate transcription factor 3 large subunit (VITF3L).